The primary structure comprises 456 residues: MPQNTLNIVILAAGKGTRMYSKMPKVLHRIGGKPMLGRVIDTAAALNPQNICVVIGHGKDQVLNAVKRDVVWVEQTEQLGTGHAVKTALPHLSAEGRTLVLYGDVPLIDVKTLKTLLEAAGNEVGLLTDVPADPTGLGRIIRDGNGSVTAIVEEKDADAAQKAVKEINTGILVLPNAKLENWLNSLSSNNAQGEYYLTDLIAKAVADGIKVHPVQVHTSYLAAGVNNKLQLAELERIFQTEQAQELLKAGVTLSDPARFDLRGRLKHGQDVVIDVNCIFEGEVEIGDNVEIGANCVIKNAKIGANSKIAPFSHLEDCEVGENNRIGPYARLRPQAKLAADVHIGNFVEIKNAAIGKGTKANHLTYIGDAEVGSKTNFGAGTIIANYDGVHKHKTVIGNEVRIGSNCVLVAPVTLGNKVTTGAGSAITRNVEDGKLALARARQTVIEGWVRPEKDKQ.

Positions 1–228 (MPQNTLNIVI…SYLAAGVNNK (228 aa)) are pyrophosphorylase. Residues 11–14 (LAAG), K25, Q75, 80–81 (GT), 102–104 (YGD), G138, E153, N168, and N226 each bind UDP-N-acetyl-alpha-D-glucosamine. D104 serves as a coordination point for Mg(2+). Position 226 (N226) interacts with Mg(2+). Residues 229–249 (LQLAELERIFQTEQAQELLKA) form a linker region. The N-acetyltransferase stretch occupies residues 250-456 (GVTLSDPARF…GWVRPEKDKQ (207 aa)). The UDP-N-acetyl-alpha-D-glucosamine site is built by R332 and K350. H362 serves as the catalytic Proton acceptor. UDP-N-acetyl-alpha-D-glucosamine-binding residues include Y365 and N376. Acetyl-CoA contacts are provided by residues A379, 385–386 (NY), S404, A422, and R439.

The protein in the N-terminal section; belongs to the N-acetylglucosamine-1-phosphate uridyltransferase family. In the C-terminal section; belongs to the transferase hexapeptide repeat family. In terms of assembly, homotrimer. Mg(2+) serves as cofactor.

It is found in the cytoplasm. The enzyme catalyses alpha-D-glucosamine 1-phosphate + acetyl-CoA = N-acetyl-alpha-D-glucosamine 1-phosphate + CoA + H(+). It carries out the reaction N-acetyl-alpha-D-glucosamine 1-phosphate + UTP + H(+) = UDP-N-acetyl-alpha-D-glucosamine + diphosphate. The protein operates within nucleotide-sugar biosynthesis; UDP-N-acetyl-alpha-D-glucosamine biosynthesis; N-acetyl-alpha-D-glucosamine 1-phosphate from alpha-D-glucosamine 6-phosphate (route II): step 2/2. Its pathway is nucleotide-sugar biosynthesis; UDP-N-acetyl-alpha-D-glucosamine biosynthesis; UDP-N-acetyl-alpha-D-glucosamine from N-acetyl-alpha-D-glucosamine 1-phosphate: step 1/1. It participates in bacterial outer membrane biogenesis; LPS lipid A biosynthesis. Functionally, catalyzes the last two sequential reactions in the de novo biosynthetic pathway for UDP-N-acetylglucosamine (UDP-GlcNAc). The C-terminal domain catalyzes the transfer of acetyl group from acetyl coenzyme A to glucosamine-1-phosphate (GlcN-1-P) to produce N-acetylglucosamine-1-phosphate (GlcNAc-1-P), which is converted into UDP-GlcNAc by the transfer of uridine 5-monophosphate (from uridine 5-triphosphate), a reaction catalyzed by the N-terminal domain. This chain is Bifunctional protein GlmU, found in Neisseria meningitidis serogroup C / serotype 2a (strain ATCC 700532 / DSM 15464 / FAM18).